Here is a 183-residue protein sequence, read N- to C-terminus: Troponin I, fast skeletal muscle (183 aa).

N-acetylserine is present on serine 2. Residues 2–48 are involved in binding TNC; sequence SDEEKKRRAATARRQHLKSAMLQLAVTEIEKEAAAKEVEKQNYLAEH. Residues 97 to 117 are involved in binding TNC and actin; that stretch reads SQKLFDLRGKFKRPPLRRVRM.

Belongs to the troponin I family. In terms of assembly, binds to actin and tropomyosin. In terms of processing, the N-terminus is blocked.

Troponin I is the inhibitory subunit of troponin, the thin filament regulatory complex which confers calcium-sensitivity to striated muscle actomyosin ATPase activity. The protein is Troponin I, fast skeletal muscle (TNNI2) of Gallus gallus (Chicken).